The chain runs to 229 residues: MMGATSPSGLELTMAVPGLSSSGSEGAGCNNNNAGGGCNMRDLDINQPASGGEEEEFPMGSVEEDEEERGVGGPHRPKKLRLSKEQSRLLEESFRLNHTLTPKQKEALAIKLKLRPRQVEVWFQNRRARTKLKQTEMECEYLKRCFGSLTEENRRLQREVEELRAMRVAPPTVLSPHTRQPLPASALTMCPRCERITAATGPPAVRPPPSSAAAAAPSPFHPRRPSAAF.

Residues 1-82 (MMGATSPSGL…GPHRPKKLRL (82 aa)) are disordered. Acidic residues predominate over residues 52–68 (GEEEEFPMGSVEEDEEE). The segment at residues 75-134 (HRPKKLRLSKEQSRLLEESFRLNHTLTPKQKEALAIKLKLRPRQVEVWFQNRRARTKLKQ) is a DNA-binding region (homeobox). A leucine-zipper region spans residues 133-177 (KQTEMECEYLKRCFGSLTEENRRLQREVEELRAMRVAPPTVLSPH). Residues 198-229 (AATGPPAVRPPPSSAAAAAPSPFHPRRPSAAF) are disordered.

Belongs to the HD-ZIP homeobox family. Class II subfamily. Homodimer. May form a heterodimer with HOX1, HOX2 or HOX7. Expressed in seedlings, roots, leaves, nodes, internodes, flowers and embryo.

It localises to the nucleus. Its function is as follows. Probable transcription repressor that binds to the DNA sequence 5'-CAAT[GC]ATTG-3'. In Oryza sativa subsp. indica (Rice), this protein is Homeobox-leucine zipper protein HOX3 (HOX3).